The following is a 257-amino-acid chain: Homeobox protein ceh-36 (257 aa).

Over residues 33–49 the composition is skewed to low complexity; the sequence is SATTSSTTMAPMAPNSE. Disordered stretches follow at residues 33–63 and 113–156; these read SATT…TSFN and DRNN…GTPE. The homeobox DNA-binding region spans 55 to 117; it reads GRRERTSFNR…NRRAKDRNNK (63 aa). The segment covering 123 to 137 has biased composition (low complexity); sequence HPGSTSSRSSNGSPH.

The protein belongs to the paired homeobox family. In terms of assembly, interacts with sox-2. Expressed in ASE and AWC chemosensory neurons. Expressed left-right asymmetrically in the embryo, in the grandmother cell and the mother cell to the MI pharyngeal motorneuron but in neither analogous precursors of the e3D neuron.

Its subcellular location is the nucleus. Its function is as follows. Probable transcription factor, acting as a progenitor identity factor regulating the development of lineally-related embryonic cells including glial, excretory and neuronal cells. Mediates chemosensory function of ASE and AWC neurons. In ASE neurons, required to diversify the fate of the ASEL neurons from the ASER neurons. Acts cell-autonomously to establish a neuronal left right asymmetry, possibly promoting asymmetric expression of the helix-loop-helix proteins ngn-1 and hlh-2. In cooperation with the transcription factor sox-2, required for the differentiation of AWC olfactory neurons. May regulate the expression of sox-2 in AWC olfactory neurons. The chain is Homeobox protein ceh-36 from Caenorhabditis elegans.